Here is a 362-residue protein sequence, read N- to C-terminus: Apelin receptor A (362 aa).

At 1 to 37 (METEGLSPMLYEDDYYYGNETGLQPCDETDWDFSYSL) the chain is on the extracellular side. An N-linked (GlcNAc...) asparagine glycan is attached at N19. Disulfide bonds link C26–C286 and C108–C185. Residues 38 to 58 (LPVFYMIVFVLGLSGNGVVIF) traverse the membrane as a helical segment. The Cytoplasmic segment spans residues 59-76 (TVWKSKPKRRSADTYIGN). The helical transmembrane segment at 77–97 (LALADLAFVVTLPLWATYTAL) threads the bilayer. The Extracellular portion of the chain corresponds to 98–110 (GFHWPFGSALCKL). A helical transmembrane segment spans residues 111 to 131 (SSYLVLLNMFASVFCLTCLSF). The Cytoplasmic portion of the chain corresponds to 132-151 (DRYLAIVHSLSSAKLRSRSS). Residues 152–172 (IIVSLAVIWLFSGLLALPSLI) traverse the membrane as a helical segment. Residues 173–199 (LRDTRVEGNNTICDLDFSGVSSKENEN) are Extracellular-facing. Residue N181 is glycosylated (N-linked (GlcNAc...) asparagine). The chain crosses the membrane as a helical span at residues 200 to 220 (FWIGGLSILTTVPGFLLPLLL). Topologically, residues 221 to 248 (MTIFYCFIGGKVTMHFQNLKKEEQKKKR) are cytoplasmic. Residues 249–269 (LLKIIITLVVVFAICWLPFHI) form a helical membrane-spanning segment. Topologically, residues 270 to 296 (LKTIHFLDLMGFLELSCSTQNIIVSLH) are extracellular. A helical transmembrane segment spans residues 297–317 (PYATCLAYVNSCLNPFLYAFF). Over 318 to 362 (DLRFRSQCFFFFGFKKVLQGHLSNTSSSLSAQTQKSEIHSLATKV) the chain is Cytoplasmic.

It belongs to the G-protein coupled receptor 1 family. In terms of tissue distribution, expressed in all blood vessels including the posterior cardinal vein, intersomitic veins and the vitelline vein network. At the gastrula stage, exclusively expressed in the mesodermal layer and at the neurula stage in the lateral plate mesoderm. Larval expression is observed in the endothelium of the primary blood vessels and the forming heart.

It localises to the cell membrane. Functionally, g protein-coupled receptor for peptide hormones apelin (apln) and apelin receptor early endogenous ligand (apela), that plays a role in the regulation of normal cardiovascular function and fluid homeostasis. When acting as apelin receptor, activates both G(i) protein pathway that inhibits adenylate cyclase activity, and the beta-arrestin pathway that promotes internalization of the receptor. Also functions as mechanoreceptor that is activated by pathological stimuli in a G-protein-independent fashion to induce beta-arrestin signaling, hence eliciting cardiac hypertrophy. However, the presence of apelin ligand blunts cardiac hypertrophic induction from APLNR/APJ on response to pathological stimuli. Plays a key role in early development such as gastrulation, blood vessels formation and heart morphogenesis by acting as a receptor for apela hormone, promoting endoderm and mesendoderm cell migration and regulating the migration of cells fated to become myocardial progenitors, respectively. Promotes angioblast migration toward the embryonic midline, i.e. the position of the future vessel formation, during vasculogenesis. May promote sinus venosus (SV)-derived endothelial cells migration into the developing heart to promote coronary blood vessel development. Required for cardiovascular development, particularly for intersomitic vein angiogenesis by acting as a receptor for apln hormone. Also plays a role in various processes in adults such as regulation of blood vessel formation, blood pressure, heart contractility, and heart failure. Acts upstream of the i/o type of G-alpha proteins in the differentiation of endothelium, erythroid cells, myeloid cells and cardiomyocytes. The chain is Apelin receptor A (aplnr-a) from Xenopus laevis (African clawed frog).